The following is a 611-amino-acid chain: Dihydroxy-acid dehydratase (611 aa).

A Mg(2+)-binding site is contributed by D81. C122 contributes to the [2Fe-2S] cluster binding site. 2 residues coordinate Mg(2+): D123 and K124. An N6-carboxylysine modification is found at K124. A [2Fe-2S] cluster-binding site is contributed by C195. A Mg(2+)-binding site is contributed by E491. S517 acts as the Proton acceptor in catalysis.

It belongs to the IlvD/Edd family. As to quaternary structure, homodimer. Requires [2Fe-2S] cluster as cofactor. Mg(2+) is required as a cofactor.

The enzyme catalyses (2R)-2,3-dihydroxy-3-methylbutanoate = 3-methyl-2-oxobutanoate + H2O. The catalysed reaction is (2R,3R)-2,3-dihydroxy-3-methylpentanoate = (S)-3-methyl-2-oxopentanoate + H2O. The protein operates within amino-acid biosynthesis; L-isoleucine biosynthesis; L-isoleucine from 2-oxobutanoate: step 3/4. It functions in the pathway amino-acid biosynthesis; L-valine biosynthesis; L-valine from pyruvate: step 3/4. In terms of biological role, functions in the biosynthesis of branched-chain amino acids. Catalyzes the dehydration of (2R,3R)-2,3-dihydroxy-3-methylpentanoate (2,3-dihydroxy-3-methylvalerate) into 2-oxo-3-methylpentanoate (2-oxo-3-methylvalerate) and of (2R)-2,3-dihydroxy-3-methylbutanoate (2,3-dihydroxyisovalerate) into 2-oxo-3-methylbutanoate (2-oxoisovalerate), the penultimate precursor to L-isoleucine and L-valine, respectively. The sequence is that of Dihydroxy-acid dehydratase from Brucella suis (strain ATCC 23445 / NCTC 10510).